A 356-amino-acid polypeptide reads, in one-letter code: Arginine kinase (356 aa).

Residues 9–91 (KLEAGFQKLQ…FDPIIEDYHI (83 aa)) form the Phosphagen kinase N-terminal domain. An L-arginine-binding site is contributed by 64-68 (GVGIY). The Phosphagen kinase C-terminal domain maps to 119-356 (FVISTRVRCG…AELIKLEQSA (238 aa)). ATP-binding positions include 122–126 (STRVR) and His185. Glu225 contacts L-arginine. An ATP-binding site is contributed by Arg229. Cys271 contributes to the L-arginine binding site. Residues 280–284 (RASVH) and 309–314 (RGTRGE) contribute to the ATP site. Glu314 contributes to the L-arginine binding site.

Belongs to the ATP:guanido phosphotransferase family.

It catalyses the reaction L-arginine + ATP = N(omega)-phospho-L-arginine + ADP + H(+). The polypeptide is Arginine kinase (ARGK) (Artemia franciscana (Brine shrimp)).